The chain runs to 66 residues: U-scoloptoxin(24)-Er2a (66 aa).

Residues 1–23 form the signal peptide; it reads MVKPLHCLIGIVLFLAVLNAGNG. The disordered stretch occupies residues 43-66; that stretch reads SLFHGNQRKKRSEEKRFSDMEQTK. Over residues 53–66 the composition is skewed to basic and acidic residues; it reads RSEEKRFSDMEQTK.

It belongs to the scoloptoxin-24 family. Expressed by the venom gland.

It localises to the secreted. This Ethmostigmus rubripes (Giant centipede) protein is U-scoloptoxin(24)-Er2a.